Consider the following 359-residue polypeptide: Membrane-bound lytic murein transglycosylase C (359 aa).

A signal peptide spans 1–16; the sequence is MKKYLALALIAPLLIS. Cys-17 carries N-palmitoyl cysteine lipidation. The S-diacylglycerol cysteine moiety is linked to residue Cys-17.

Belongs to the transglycosylase Slt family.

The protein resides in the cell outer membrane. It catalyses the reaction Exolytic cleavage of the (1-&gt;4)-beta-glycosidic linkage between N-acetylmuramic acid (MurNAc) and N-acetylglucosamine (GlcNAc) residues in peptidoglycan, from either the reducing or the non-reducing ends of the peptidoglycan chains, with concomitant formation of a 1,6-anhydrobond in the MurNAc residue.. Its function is as follows. Murein-degrading enzyme. May play a role in recycling of muropeptides during cell elongation and/or cell division. The chain is Membrane-bound lytic murein transglycosylase C from Escherichia coli O139:H28 (strain E24377A / ETEC).